Reading from the N-terminus, the 228-residue chain is Max-interacting protein 1 (228 aa).

Disordered stretches follow at residues 29 to 76 (GYAS…NELE) and 162 to 228 (GSTI…SFTS). Residues 43 to 56 (QHSKPPRRLSRAQK) are compositionally biased toward basic residues. Polar residues predominate over residues 57 to 70 (HSSGSSNTSTANRS). Positions 67-119 (ANRSTHNELEKNRRAHLRLCLERLKVLIPLGPDCTRHTTLGLLNKAKAHIKKL) constitute a bHLH domain. Over residues 173–183 (EREEIEVDVES) the composition is skewed to acidic residues. Residues 216 to 228 (GYSSASVKLSFTS) are compositionally biased toward polar residues.

In terms of assembly, efficient DNA binding requires dimerization with another bHLH protein. Binds DNA as a heterodimer with MAX. Interacts with SMC3. Interacts with RNF17.

The protein localises to the nucleus. Its function is as follows. Transcriptional repressor. MXI1 binds with MAX to form a sequence-specific DNA-binding protein complex which recognizes the core sequence 5'-CAC[GA]TG-3'. MXI1 thus antagonizes MYC transcriptional activity by competing for MAX. The sequence is that of Max-interacting protein 1 (Mxi1) from Rattus norvegicus (Rat).